The chain runs to 49 residues: ADDKNPLEECFREDDYEGFLEIAKNGLSTTSNPKRVVIVGAGMSGLAAY.

43-44 (MS) serves as a coordination point for FAD.

It belongs to the flavin monoamine oxidase family. FIG1 subfamily. As to quaternary structure, homodimer; non-covalently linked. FAD serves as cofactor. N-glycosylated. In terms of tissue distribution, expressed by the venom gland.

The protein resides in the secreted. It carries out the reaction an L-alpha-amino acid + O2 + H2O = a 2-oxocarboxylate + H2O2 + NH4(+). It catalyses the reaction L-leucine + O2 + H2O = 4-methyl-2-oxopentanoate + H2O2 + NH4(+). Catalyzes an oxidative deamination of predominantly hydrophobic and aromatic L-amino acids, thus producing hydrogen peroxide that may contribute to the diverse toxic effects of this enzyme. Shows activity on L-Leu. Exhibits diverse biological activities, such as hemorrhage, hemolysis, edema, antibacterial and antiparasitic activities, as well as regulation of platelet aggregation. Its effect on platelets is controversial, since it either induces aggregation or inhibits agonist-induced aggregation. These different effects are probably due to different experimental conditions. In addition, this protein induces apoptosis and necrosis and has inhibitory effects on rat kidney function (decrease of blood flow and glomerular filtration). The chain is L-amino-acid oxidase from Bothrops insularis (Golden lancehead).